Here is a 339-residue protein sequence, read N- to C-terminus: DNA-directed RNA polymerase subunit alpha (339 aa).

Positions 1 to 233 (MVREKVRIST…DLFIPFLHAE (233 aa)) are alpha N-terminal domain (alpha-NTD). The tract at residues 267–339 (IALKSIFIDQ…FTINLPKNKF (73 aa)) is alpha C-terminal domain (alpha-CTD).

It belongs to the RNA polymerase alpha chain family. In terms of assembly, in plastids the minimal PEP RNA polymerase catalytic core is composed of four subunits: alpha, beta, beta', and beta''. When a (nuclear-encoded) sigma factor is associated with the core the holoenzyme is formed, which can initiate transcription.

It localises to the plastid. It is found in the chloroplast. It catalyses the reaction RNA(n) + a ribonucleoside 5'-triphosphate = RNA(n+1) + diphosphate. Functionally, DNA-dependent RNA polymerase catalyzes the transcription of DNA into RNA using the four ribonucleoside triphosphates as substrates. The polypeptide is DNA-directed RNA polymerase subunit alpha (Populus alba (White poplar)).